A 20-amino-acid polypeptide reads, in one-letter code: Hongotoxin-5 (20 aa).

This sequence belongs to the short scorpion toxin superfamily. Potassium channel inhibitor family. Alpha-KTx 02 subfamily. Expressed by the venom gland.

The protein localises to the secreted. Its function is as follows. Potent selective inhibitor of Kv1/KCNA voltage-gated potassium channels. The polypeptide is Hongotoxin-5 (Centruroides limbatus (Bark scorpion)).